The following is a 514-amino-acid chain: Maturase K (514 aa).

Belongs to the intron maturase 2 family. MatK subfamily.

The protein localises to the plastid. It is found in the chloroplast. Functionally, usually encoded in the trnK tRNA gene intron. Probably assists in splicing its own and other chloroplast group II introns. In Zamia integrifolia (Coontie), this protein is Maturase K.